The sequence spans 343 residues: Squamosa promoter-binding-like protein 11 (343 aa).

The tract at residues methionine 1 to glycine 48 is disordered. Composition is skewed to low complexity over residues serine 7–aspartate 19 and aspartate 37–glycine 48. The SBP-type zinc-finger motif lies at alanine 64 to proline 141. 8 residues coordinate Zn(2+): cysteine 67, cysteine 72, cysteine 89, histidine 92, cysteine 108, cysteine 111, histidine 115, and cysteine 127. The Bipartite nuclear localization signal motif lies at lysine 124–lysine 140.

In terms of tissue distribution, expressed in stems, leaf sheaths, and young panicles.

The protein resides in the nucleus. In terms of biological role, trans-acting factor that binds specifically to the consensus nucleotide sequence 5'-TNCGTACAA-3'. May be involved in panicle development. This is Squamosa promoter-binding-like protein 11 (SPL11) from Oryza sativa subsp. japonica (Rice).